Consider the following 152-residue polypeptide: Protein SprT-like (152 aa).

Residues 7–148 enclose the SprT-like domain; it reads QRLVEEVSLQ…GKCKGKLILI (142 aa). H67 contacts Zn(2+). Residue E68 is part of the active site. H71 contributes to the Zn(2+) binding site.

This sequence belongs to the SprT family. Requires Zn(2+) as cofactor.

Its subcellular location is the cytoplasm. This Bacillus cereus (strain ATCC 10987 / NRS 248) protein is Protein SprT-like.